The chain runs to 469 residues: Glutamate--tRNA ligase (469 aa).

A 'HIGH' region motif is present at residues 11-21; the sequence is PSPTGFIHLGN. A compositionally biased stretch (basic and acidic residues) spans 118–131; it reads GEKPRYDGTWRPEP. Positions 118 to 139 are disordered; sequence GEKPRYDGTWRPEPGKVLPEPP. The short motif at 243–247 is the 'KMSKS' region element; that stretch reads KMSKR. Lysine 246 is a binding site for ATP.

Belongs to the class-I aminoacyl-tRNA synthetase family. Glutamate--tRNA ligase type 1 subfamily. In terms of assembly, monomer.

It localises to the cytoplasm. It catalyses the reaction tRNA(Glu) + L-glutamate + ATP = L-glutamyl-tRNA(Glu) + AMP + diphosphate. Functionally, catalyzes the attachment of glutamate to tRNA(Glu) in a two-step reaction: glutamate is first activated by ATP to form Glu-AMP and then transferred to the acceptor end of tRNA(Glu). The protein is Glutamate--tRNA ligase of Burkholderia pseudomallei (strain 668).